The chain runs to 445 residues: Homogentisate 1,2-dioxygenase (445 aa).

The residue at position 98 (lysine 98) is an N6-acetyllysine. Positions 335, 341, and 371 each coordinate Fe cation. At lysine 414 the chain carries N6-succinyllysine.

It belongs to the homogentisate dioxygenase family. In terms of assembly, homohexamer arranged as a dimer of trimers. Fe cation is required as a cofactor.

It carries out the reaction homogentisate + O2 = 4-maleylacetoacetate + H(+). It participates in amino-acid degradation; L-phenylalanine degradation; acetoacetate and fumarate from L-phenylalanine: step 4/6. Its function is as follows. Catalyzes the conversion of homogentisate to maleylacetoacetate. This chain is Homogentisate 1,2-dioxygenase (Hgd), found in Mus musculus (Mouse).